Reading from the N-terminus, the 301-residue chain is Ankyrin repeat domain-containing protein 29 (301 aa).

8 ANK repeats span residues 11–41 (PLANAAFWAARRGNLALLKLLLNSGRVDVDC), 45–74 (HGTTLLMVAAYAGHIDCVRELVLQGADINL), 78–107 (SGTTALFFAAQQGHNDVVRFLFGFGASTEF), 111–140 (DGGTALLAASQYGHMQVVETLLKHGANIHD), 144–173 (DGATALFLAAQGGYLDVIRLLLASGAKVNQ), 177–206 (DGTAPLWIASQMGHSEVVRVMLLRGADRDA), 210–239 (DGTTALLKAANKGYNDVIKELLKFSPTLGI), and 242–271 (NGTSALHAAVLSGNIKTVALLLEAGADPSL).

This is Ankyrin repeat domain-containing protein 29 (ANKRD29) from Homo sapiens (Human).